Consider the following 166-residue polypeptide: Phospholipase A2 inhibitor (166 aa).

The first 19 residues, 1–19, serve as a signal peptide directing secretion; the sequence is MRLILLSGLLLLGIFLANG. The C-type lectin domain occupies 46-161; sequence LRGAFLTVYK…CDDNLLVVCE (116 aa). N-linked (GlcNAc...) asparagine glycosylation is found at Asn61 and Asn122. 2 disulfide bridges follow: Cys83/Cys160 and Cys138/Cys152.

It belongs to the alpha-type phospholipase A2 inhibitor family. In terms of assembly, homotrimer; non-covalently linked. Expressed by the liver.

The protein localises to the secreted. This phospholipase A2 inhibitor binds directly phospholipase A2 in the presence or absence of calcium. This is Phospholipase A2 inhibitor from Bothrops alternatus (Urutu).